The chain runs to 1044 residues: Disease resistance protein PIK6-NP (1044 aa).

Residues 3–184 (LAVGASEATM…PQIVSIKEPV (182 aa)) form a structured coiled coil (CC) domain region. The 357-residue stretch at 187 to 543 (KTVMENLEKW…IAEGFATEKQ (357 aa)) folds into the NB-ARC domain. Residues 258-302 (QVSKQEEAGGSTESSSRDENTREPQGSSSTSSREENTAESGTKRM) form a disordered region. LRR repeat units follow at residues 635-657 (LAQV…SFNY), 682-705 (MLVL…IEKL), and 706-728 (EYLE…VGQL). A disordered region spans residues 737–771 (GNKNTRKGLRLPQEKRNKAMKNPSPQGKTKEPAEK). 6 LRR repeats span residues 808–834 (LTGL…LLSS), 840–862 (SCGL…LYNM), 866–888 (PRYL…ITSI), 889–911 (TTLN…ILRN), 935–958 (KGIL…EFKS), and 980–1004 (MPAL…ILEN).

Belongs to the disease resistance NB-LRR family.

Probable disease resistance protein. Resistance proteins guard the plant against pathogens that contain an appropriate avirulence protein via an indirect interaction with this avirulence protein. That triggers a defense system including the hypersensitive response, which restricts the pathogen growth. At the opposite of cultivar Kusabue, the cultivar Nipponbare doesn't recognize the effector avirulence protein AVR-Pik from M.oryzae. This is Disease resistance protein PIK6-NP from Oryza sativa subsp. japonica (Rice).